Reading from the N-terminus, the 247-residue chain is MFRFMRDVEPEDPMFLMDPFAIHRQHMSRMLSGGFGYSPFLSITDGNMPATRPASRRMQAGAVSPFGMLGMSGGFMDMFGMMNDMIGNMEHMAAGGNCQTFSSSTVISYSNTGDGAPKVYQETSEMRSAPGGIRETRRTVRDSDSGLEQMSIGHHIRDRAHILQRSRNHRTGDQEERQDYINLDESEAAAFDDEWRRETSRYRQQRPLEFRRHEASVGGGRRAEGPPRLAIQGPEDSPSRQSRRYDW.

The segment at 122 to 247 (ETSEMRSAPG…PSRQSRRYDW (126 aa)) is disordered. The span at 134-144 (RETRRTVRDSD) shows a compositional bias: basic and acidic residues. A compositionally biased stretch (basic residues) spans 154–169 (HHIRDRAHILQRSRNH). Residues 170–179 (RTGDQEERQD) are compositionally biased toward basic and acidic residues. Positions 182 to 192 (NLDESEAAAFD) are enriched in acidic residues. A compositionally biased stretch (basic and acidic residues) spans 193 to 225 (DEWRRETSRYRQQRPLEFRRHEASVGGGRRAEG). 3 positions are modified to phosphoserine: Ser-216, Ser-237, and Ser-239.

The protein belongs to the MLF family.

The protein localises to the cytoplasm. Its subcellular location is the nucleus. This is Myeloid leukemia factor 2 (Mlf2) from Mus musculus (Mouse).